Reading from the N-terminus, the 466-residue chain is Glutamate decarboxylase alpha (466 aa).

Residues Thr-62 and Asn-83 each contribute to the substrate site. Residues 126–127 (SS), Thr-212, and His-275 each bind pyridoxal 5'-phosphate. N6-(pyridoxal phosphate)lysine is present on Lys-276.

It belongs to the group II decarboxylase family. Homohexamer. It depends on pyridoxal 5'-phosphate as a cofactor.

The enzyme catalyses L-glutamate + H(+) = 4-aminobutanoate + CO2. Its function is as follows. Converts glutamate to gamma-aminobutyrate (GABA), consuming one intracellular proton in the reaction. The gad system helps to maintain a near-neutral intracellular pH when cells are exposed to extremely acidic conditions. The ability to survive transit through the acidic conditions of the stomach is essential for successful colonization of the mammalian host by commensal and pathogenic bacteria. The polypeptide is Glutamate decarboxylase alpha (gadA) (Shigella flexneri).